The primary structure comprises 169 residues: Cilia- and flagella-associated protein 276 (169 aa).

2 disordered regions span residues 26-45 (SKKL…EPWS) and 150-169 (HTAA…FFST). Positions 36-45 (HLAQQQEPWS) are enriched in polar residues. Residues 160–169 (RKKDGGFFST) show a composition bias toward basic and acidic residues.

In terms of assembly, microtubule inner protein component of sperm flagellar doublet microtubules. Expressed in cerebrum, cerebellum, gastrocnemius muscle, spinal cord and lung tissues.

It localises to the cytoplasm. The protein resides in the cytoskeleton. The protein localises to the flagellum axoneme. It is found in the cilium axoneme. Its function is as follows. Microtubule inner protein (MIP) part of the dynein-decorated doublet microtubules (DMTs) in cilia axoneme, which is required for motile cilia beating. May play an important role for the maintenance of myelin-axon integrity. May affect intracellular Ca(2+) homeostasis. The sequence is that of Cilia- and flagella-associated protein 276 from Homo sapiens (Human).